Here is a 117-residue protein sequence, read N- to C-terminus: DNA-directed RNA polymerase subunit omega (117 aa).

The protein belongs to the RNA polymerase subunit omega family. As to quaternary structure, the RNAP catalytic core consists of 2 alpha, 1 beta, 1 beta' and 1 omega subunit. When a sigma factor is associated with the core the holoenzyme is formed, which can initiate transcription.

It catalyses the reaction RNA(n) + a ribonucleoside 5'-triphosphate = RNA(n+1) + diphosphate. In terms of biological role, promotes RNA polymerase assembly. Latches the N- and C-terminal regions of the beta' subunit thereby facilitating its interaction with the beta and alpha subunits. This Jannaschia sp. (strain CCS1) protein is DNA-directed RNA polymerase subunit omega.